A 340-amino-acid polypeptide reads, in one-letter code: Guanine nucleotide-binding protein G(I)/G(S)/G(T) subunit beta-3 (340 aa).

WD repeat units lie at residues 53 to 83 (GHLA…IVWD), 95 to 125 (LRSS…SIYN), 141 to 170 (AHTG…ALWD), 182 to 212 (GHTG…KLWD), 224 to 254 (GHES…RLFD), 268 to 298 (SIIC…NVWD), and 310 to 340 (GHDN…KIWN).

It belongs to the WD repeat G protein beta family. As to quaternary structure, g proteins are composed of 3 units, alpha, beta and gamma. Interacts with RASD2.

In terms of biological role, guanine nucleotide-binding proteins (G proteins) are involved as a modulator or transducer in various transmembrane signaling systems. The beta and gamma chains are required for the GTPase activity, for replacement of GDP by GTP, and for G protein-effector interaction. The sequence is that of Guanine nucleotide-binding protein G(I)/G(S)/G(T) subunit beta-3 (Gnb3) from Mus musculus (Mouse).